Here is a 162-residue protein sequence, read N- to C-terminus: Caveolin-2 (162 aa).

The Cytoplasmic segment spans residues 1–86 (MGLETEKADV…FEISKYVMYK (86 aa)). Tyr19 carries the phosphotyrosine; by SRC modification. Phosphoserine is present on residues Ser20 and Ser23. Tyr27 carries the phosphotyrosine; by SRC modification. Ser36 is subject to Phosphoserine. The helical intramembrane region spans 87–107 (FLTVFLAIPLAFLAGILFATL). The Cytoplasmic segment spans residues 108 to 162 (SCLHIWIIMPFVKTCLMVLPSVQTIWKSVTDAIIAPLCTSIGRSFSSVSLQLSQD).

The protein belongs to the caveolin family. As to quaternary structure, monomer or homodimer. Interacts with CAV1; the interaction forms a stable heterooligomeric complex that is required for targeting to lipid rafts and for caveolae formation. Tyrosine phosphorylated forms do not form heterooligomers with the Tyr-19-phosphorylated form existing as a monomer or dimer, and the Tyr-27-form as a monomer only. Interacts (tyrosine phosphorylated form) with the SH2 domain-containing proteins, RASA1, NCK1 and SRC. Interacts (tyrosine phosphorylated form) with INSR, the interaction (Tyr-27-phosphorylated form) is increased on insulin stimulation. Interacts (Tyr-19 phosphorylated form) with MAPK1 (phosphorylated form); the interaction, promoted by insulin, leads to nuclear location and MAPK1 activation. Interacts with STAT3; the interaction is increased on insulin-induced tyrosine phosphorylation leading to STAT activation. Phosphorylated on serine and tyrosine residues. CAV1 promotes phosphorylation on Ser-23 which then targets the complex to the plasma membrane, lipid rafts and caveolae. Phosphorylation on Ser-36 appears to modulate mitosis in endothelial cells. Phosphorylation on both Tyr-19 and Tyr-27 is required for insulin-induced 'Ser-727' phosphorylation of STAT3 and its activation. Phosphorylation on Tyr-19 is required for insulin-induced phosphorylation of MAPK1 and DNA binding of STAT3. Tyrosine phosphorylation is induced by both EGF and insulin (By. similarity).

It is found in the nucleus. The protein resides in the cytoplasm. The protein localises to the golgi apparatus membrane. Its subcellular location is the cell membrane. It localises to the membrane. It is found in the caveola. In terms of biological role, may act as a scaffolding protein within caveolar membranes. Interacts directly with G-protein alpha subunits and can functionally regulate their activity. Acts as an accessory protein in conjunction with CAV1 in targeting to lipid rafts and driving caveolae formation. The Ser-36 phosphorylated form has a role in modulating mitosis in endothelial cells. Positive regulator of cellular mitogenesis of the MAPK signaling pathway. Required for the insulin-stimulated nuclear translocation and activation of MAPK1 and STAT3, and the subsequent regulation of cell cycle progression. The protein is Caveolin-2 (CAV2) of Plecturocebus moloch (Dusky titi monkey).